A 147-amino-acid chain; its full sequence is Large ribosomal subunit protein uL13 (147 aa).

Belongs to the universal ribosomal protein uL13 family. Part of the 50S ribosomal subunit.

Functionally, this protein is one of the early assembly proteins of the 50S ribosomal subunit, although it is not seen to bind rRNA by itself. It is important during the early stages of 50S assembly. The sequence is that of Large ribosomal subunit protein uL13 from Mycobacterium leprae (strain Br4923).